Here is a 326-residue protein sequence, read N- to C-terminus: Putative ribose-phosphate pyrophosphokinase 2 (326 aa).

ATP contacts are provided by residues 43 to 45 (DGE) and 102 to 103 (RQ). H136 contributes to the Mg(2+) binding site. D-ribose 5-phosphate is bound by residues D226 and 230-234 (NTGKT).

This sequence belongs to the ribose-phosphate pyrophosphokinase family. Class I subfamily. In terms of assembly, homohexamer. Mg(2+) is required as a cofactor.

Its subcellular location is the cytoplasm. The catalysed reaction is D-ribose 5-phosphate + ATP = 5-phospho-alpha-D-ribose 1-diphosphate + AMP + H(+). The protein operates within metabolic intermediate biosynthesis; 5-phospho-alpha-D-ribose 1-diphosphate biosynthesis; 5-phospho-alpha-D-ribose 1-diphosphate from D-ribose 5-phosphate (route I): step 1/1. In terms of biological role, involved in the biosynthesis of the central metabolite phospho-alpha-D-ribosyl-1-pyrophosphate (PRPP) via the transfer of pyrophosphoryl group from ATP to 1-hydroxyl of ribose-5-phosphate (Rib-5-P). In Streptococcus mutans serotype c (strain ATCC 700610 / UA159), this protein is Putative ribose-phosphate pyrophosphokinase 2.